Here is a 330-residue protein sequence, read N- to C-terminus: Olfactory receptor 11H6 (330 aa).

Topologically, residues 1–43 (MFFIIHSLVTSVFLTALGPQNRTMHFVTEFVLLGFHGQREMQS) are extracellular. Asparagine 21 carries N-linked (GlcNAc...) asparagine glycosylation. The chain crosses the membrane as a helical span at residues 44-64 (CFFSFILVLYLLTLLGNGAIV). Over 65–72 (CAVKLDRR) the chain is Cytoplasmic. A helical transmembrane segment spans residues 73–93 (LHTPMYILLGNFAFLEIWYIS). At 94 to 117 (STVPNMLVNILSEIKTISFSGCFL) the chain is on the extracellular side. Residues cysteine 115 and cysteine 207 are joined by a disulfide bond. A helical membrane pass occupies residues 118-138 (QFYFFFSLGTTECFFLSVMAY). At 139–157 (DRYLAICRPLHYPSIMTGK) the chain is on the cytoplasmic side. A helical transmembrane segment spans residues 158 to 178 (FCIILVCVCWVGGFLCYPVPI). The Extracellular portion of the chain corresponds to 179-215 (VLISQLPFCGPNIIDHLVCDPGPLFALACISAPSTEL). Residues 216–235 (ICYTFNSMIIFGPFLSILGS) traverse the membrane as a helical segment. Residues 236–255 (YTLVIRAVLCIPSGAGRTKA) are Cytoplasmic-facing. The helical transmembrane segment at 256-276 (FSTCGSHLMVVSLFYGTLMVM) threads the bilayer. The Extracellular segment spans residues 277-289 (YVSPTSGNPAGMQ). A helical membrane pass occupies residues 290 to 310 (KIITLVYTAMTPFLNPLIYSL). The Cytoplasmic segment spans residues 311-330 (RNKDMKDALKRVLGLTVSQN).

It belongs to the G-protein coupled receptor 1 family.

The protein localises to the cell membrane. Odorant receptor. In Homo sapiens (Human), this protein is Olfactory receptor 11H6 (OR11H6).